We begin with the raw amino-acid sequence, 275 residues long: Large ribosomal subunit protein uL2 (275 aa).

The interval 208 to 275 (AGAKRWRGRR…NMIIRDRRKK (68 aa)) is disordered. Basic residues-rich tracts occupy residues 209 to 219 (GAKRWRGRRPT) and 254 to 263 (KGYKTRRNKR).

This sequence belongs to the universal ribosomal protein uL2 family. As to quaternary structure, part of the 50S ribosomal subunit. Forms a bridge to the 30S subunit in the 70S ribosome.

Its function is as follows. One of the primary rRNA binding proteins. Required for association of the 30S and 50S subunits to form the 70S ribosome, for tRNA binding and peptide bond formation. It has been suggested to have peptidyltransferase activity; this is somewhat controversial. Makes several contacts with the 16S rRNA in the 70S ribosome. The polypeptide is Large ribosomal subunit protein uL2 (Coxiella burnetii (strain CbuG_Q212) (Coxiella burnetii (strain Q212))).